A 291-amino-acid polypeptide reads, in one-letter code: Ribosomal RNA small subunit methyltransferase H (291 aa).

Residues 25–27 (GGH), Asp-45, Phe-73, Asp-88, and Gln-95 contribute to the S-adenosyl-L-methionine site.

The protein belongs to the methyltransferase superfamily. RsmH family.

The protein localises to the cytoplasm. The enzyme catalyses cytidine(1402) in 16S rRNA + S-adenosyl-L-methionine = N(4)-methylcytidine(1402) in 16S rRNA + S-adenosyl-L-homocysteine + H(+). Functionally, specifically methylates the N4 position of cytidine in position 1402 (C1402) of 16S rRNA. This is Ribosomal RNA small subunit methyltransferase H from Flavobacterium psychrophilum (strain ATCC 49511 / DSM 21280 / CIP 103535 / JIP02/86).